Reading from the N-terminus, the 358-residue chain is Peptide chain release factor 1 (358 aa).

Gln233 carries the N5-methylglutamine modification. The segment at Ala286–Asn309 is disordered.

It belongs to the prokaryotic/mitochondrial release factor family. Post-translationally, methylated by PrmC. Methylation increases the termination efficiency of RF1.

Its subcellular location is the cytoplasm. In terms of biological role, peptide chain release factor 1 directs the termination of translation in response to the peptide chain termination codons UAG and UAA. This Carboxydothermus hydrogenoformans (strain ATCC BAA-161 / DSM 6008 / Z-2901) protein is Peptide chain release factor 1.